A 574-amino-acid polypeptide reads, in one-letter code: Dihydroxy-acid dehydratase 2 (574 aa).

Residues 1 to 20 (MNAKTNIKQRLPSRHVTEGP) form a disordered region. Cys56 contributes to the [2Fe-2S] cluster binding site. A Mg(2+)-binding site is contributed by Asp88. Cys129 is a binding site for [2Fe-2S] cluster. Asp130 and Lys131 together coordinate Mg(2+). Lys131 carries the post-translational modification N6-carboxylysine. Cys201 contributes to the [2Fe-2S] cluster binding site. Glu451 is a binding site for Mg(2+). The Proton acceptor role is filled by Ser477.

The protein belongs to the IlvD/Edd family. As to quaternary structure, homodimer. The cofactor is [2Fe-2S] cluster. Mg(2+) is required as a cofactor.

It catalyses the reaction (2R)-2,3-dihydroxy-3-methylbutanoate = 3-methyl-2-oxobutanoate + H2O. The catalysed reaction is (2R,3R)-2,3-dihydroxy-3-methylpentanoate = (S)-3-methyl-2-oxopentanoate + H2O. It participates in amino-acid biosynthesis; L-isoleucine biosynthesis; L-isoleucine from 2-oxobutanoate: step 3/4. The protein operates within amino-acid biosynthesis; L-valine biosynthesis; L-valine from pyruvate: step 3/4. In terms of biological role, functions in the biosynthesis of branched-chain amino acids. Catalyzes the dehydration of (2R,3R)-2,3-dihydroxy-3-methylpentanoate (2,3-dihydroxy-3-methylvalerate) into 2-oxo-3-methylpentanoate (2-oxo-3-methylvalerate) and of (2R)-2,3-dihydroxy-3-methylbutanoate (2,3-dihydroxyisovalerate) into 2-oxo-3-methylbutanoate (2-oxoisovalerate), the penultimate precursor to L-isoleucine and L-valine, respectively. The polypeptide is Dihydroxy-acid dehydratase 2 (Bradyrhizobium diazoefficiens (strain JCM 10833 / BCRC 13528 / IAM 13628 / NBRC 14792 / USDA 110)).